The chain runs to 321 residues: Basic peroxidase (321 aa).

A signal peptide spans 1 to 30; sequence MSYHKSSGTTLMVPLFMLLISVNYFMSCNA. Gln31 carries the pyrrolidone carboxylic acid modification. 4 disulfide bridges follow: Cys41–Cys117, Cys74–Cys79, Cys123–Cys317, and Cys202–Cys228. Residue His72 is the Proton acceptor of the active site. The Ca(2+) site is built by Asp73, Val76, Gly78, Asp80, and Ser82. Pro165 is a binding site for substrate. His195 contacts heme b. A Ca(2+)-binding site is contributed by Thr196. N-linked (GlcNAc...) asparagine glycosylation is found at Asn211 and Asn221. The Ca(2+) site is built by Asp241, Thr244, and Asp249.

Belongs to the peroxidase family. Classical plant (class III) peroxidase subfamily. Heme b is required as a cofactor. It depends on Ca(2+) as a cofactor. In terms of processing, N-glycosylated. As to expression, expressed in tracheary elements, roots, young and old hypocotyls, and stems in the partially glycosylated form and in roots and young hypocotyls in the fully glycosylated form. None of the isoforms is significantly expressed in leaves or cotyledons.

It localises to the secreted. The catalysed reaction is 2 a phenolic donor + H2O2 = 2 a phenolic radical donor + 2 H2O. In terms of biological role, removal of H(2)O(2), oxidation of toxic reductants, biosynthesis and degradation of lignin, suberization, auxin catabolism, response to environmental stresses such as wounding, pathogen attack and oxidative stress. These functions might be dependent on each isozyme/isoform in each plant tissue. Involved in the synthesis of highly polymerized lignins. The sequence is that of Basic peroxidase (POD3) from Zinnia elegans (Garden zinnia).